The sequence spans 490 residues: ATP synthase subunit beta, chloroplastic (490 aa).

Residue 170–177 coordinates ATP; that stretch reads GGAGVGKT.

It belongs to the ATPase alpha/beta chains family. F-type ATPases have 2 components, CF(1) - the catalytic core - and CF(0) - the membrane proton channel. CF(1) has five subunits: alpha(3), beta(3), gamma(1), delta(1), epsilon(1). CF(0) has four main subunits: a(1), b(1), b'(1) and c(9-12).

The protein resides in the plastid. It localises to the chloroplast thylakoid membrane. The catalysed reaction is ATP + H2O + 4 H(+)(in) = ADP + phosphate + 5 H(+)(out). In terms of biological role, produces ATP from ADP in the presence of a proton gradient across the membrane. The catalytic sites are hosted primarily by the beta subunits. This chain is ATP synthase subunit beta, chloroplastic, found in Ipomoea setosa (Brazilian morning glory).